The following is a 345-amino-acid chain: Ferrochelatase (345 aa).

Positions 215 and 296 each coordinate Fe cation.

It belongs to the ferrochelatase family.

The protein localises to the cytoplasm. The enzyme catalyses heme b + 2 H(+) = protoporphyrin IX + Fe(2+). The protein operates within porphyrin-containing compound metabolism; protoheme biosynthesis; protoheme from protoporphyrin-IX: step 1/1. Functionally, catalyzes the ferrous insertion into protoporphyrin IX. This chain is Ferrochelatase, found in Rhodopseudomonas palustris (strain BisA53).